The sequence spans 323 residues: 4-hydroxy-3-methylbut-2-enyl diphosphate reductase (323 aa).

Cys12 is a [4Fe-4S] cluster binding site. Residues His43 and His81 each contribute to the (2E)-4-hydroxy-3-methylbut-2-enyl diphosphate site. Positions 43 and 81 each coordinate dimethylallyl diphosphate. Isopentenyl diphosphate-binding residues include His43 and His81. Position 103 (Cys103) interacts with [4Fe-4S] cluster. A (2E)-4-hydroxy-3-methylbut-2-enyl diphosphate-binding site is contributed by His131. Residue His131 participates in dimethylallyl diphosphate binding. His131 is a binding site for isopentenyl diphosphate. Glu133 (proton donor) is an active-site residue. Thr170 is a (2E)-4-hydroxy-3-methylbut-2-enyl diphosphate binding site. Cys198 is a binding site for [4Fe-4S] cluster. Residues Ser226, Asn228, and Ser271 each coordinate (2E)-4-hydroxy-3-methylbut-2-enyl diphosphate. Ser226, Asn228, and Ser271 together coordinate dimethylallyl diphosphate. Residues Ser226, Asn228, and Ser271 each contribute to the isopentenyl diphosphate site.

This sequence belongs to the IspH family. [4Fe-4S] cluster is required as a cofactor.

It catalyses the reaction isopentenyl diphosphate + 2 oxidized [2Fe-2S]-[ferredoxin] + H2O = (2E)-4-hydroxy-3-methylbut-2-enyl diphosphate + 2 reduced [2Fe-2S]-[ferredoxin] + 2 H(+). The catalysed reaction is dimethylallyl diphosphate + 2 oxidized [2Fe-2S]-[ferredoxin] + H2O = (2E)-4-hydroxy-3-methylbut-2-enyl diphosphate + 2 reduced [2Fe-2S]-[ferredoxin] + 2 H(+). Its pathway is isoprenoid biosynthesis; dimethylallyl diphosphate biosynthesis; dimethylallyl diphosphate from (2E)-4-hydroxy-3-methylbutenyl diphosphate: step 1/1. It functions in the pathway isoprenoid biosynthesis; isopentenyl diphosphate biosynthesis via DXP pathway; isopentenyl diphosphate from 1-deoxy-D-xylulose 5-phosphate: step 6/6. Its function is as follows. Catalyzes the conversion of 1-hydroxy-2-methyl-2-(E)-butenyl 4-diphosphate (HMBPP) into a mixture of isopentenyl diphosphate (IPP) and dimethylallyl diphosphate (DMAPP). Acts in the terminal step of the DOXP/MEP pathway for isoprenoid precursor biosynthesis. The chain is 4-hydroxy-3-methylbut-2-enyl diphosphate reductase from Lysinibacillus sphaericus (strain C3-41).